We begin with the raw amino-acid sequence, 101 residues long: Small ribosomal subunit protein uS14 (101 aa).

It belongs to the universal ribosomal protein uS14 family. Part of the 30S ribosomal subunit. Contacts proteins S3 and S10.

Functionally, binds 16S rRNA, required for the assembly of 30S particles and may also be responsible for determining the conformation of the 16S rRNA at the A site. This Polynucleobacter asymbioticus (strain DSM 18221 / CIP 109841 / QLW-P1DMWA-1) (Polynucleobacter necessarius subsp. asymbioticus) protein is Small ribosomal subunit protein uS14.